We begin with the raw amino-acid sequence, 292 residues long: 3-methyl-2-oxobutanoate hydroxymethyltransferase 2 (292 aa).

Residues D52 and D91 each coordinate Mg(2+). Residues 52–53, D91, and K120 contribute to the 3-methyl-2-oxobutanoate site; that span reads DS. E122 provides a ligand contact to Mg(2+). The active-site Proton acceptor is E189.

It belongs to the PanB family. Homodecamer; pentamer of dimers. It depends on Mg(2+) as a cofactor.

The protein resides in the cytoplasm. The enzyme catalyses 3-methyl-2-oxobutanoate + (6R)-5,10-methylene-5,6,7,8-tetrahydrofolate + H2O = 2-dehydropantoate + (6S)-5,6,7,8-tetrahydrofolate. The protein operates within cofactor biosynthesis; (R)-pantothenate biosynthesis; (R)-pantoate from 3-methyl-2-oxobutanoate: step 1/2. Catalyzes the reversible reaction in which hydroxymethyl group from 5,10-methylenetetrahydrofolate is transferred onto alpha-ketoisovalerate to form ketopantoate. This chain is 3-methyl-2-oxobutanoate hydroxymethyltransferase 2, found in Bradyrhizobium diazoefficiens (strain JCM 10833 / BCRC 13528 / IAM 13628 / NBRC 14792 / USDA 110).